The primary structure comprises 194 residues: Lymphocyte antigen 6 complex locus protein G5b (194 aa).

The N-terminal stretch at 1 to 18 (MRARVLVGMLTMVGFAMG) is a signal peptide. Residues 26–118 (RTCHLCLLED…SAQHQSTLRG (93 aa)) form the UPAR/Ly6 domain. 5 disulfides stabilise this stretch: cysteine 28–cysteine 55, cysteine 31–cysteine 40, cysteine 47–cysteine 73, cysteine 81–cysteine 98, and cysteine 99–cysteine 104. Asparagine 63 carries an N-linked (GlcNAc...) asparagine glycan. A glycan (N-linked (GlcNAc...) asparagine) is linked at asparagine 141.

In terms of assembly, monomer. Post-translationally, N-glycosylated.

Its subcellular location is the secreted. In Mus musculus (Mouse), this protein is Lymphocyte antigen 6 complex locus protein G5b (Ly6g5b).